Reading from the N-terminus, the 152-residue chain is Large ribosomal subunit protein bL9 (152 aa).

The protein belongs to the bacterial ribosomal protein bL9 family.

Functionally, binds to the 23S rRNA. In Synechococcus sp. (strain CC9902), this protein is Large ribosomal subunit protein bL9.